A 382-amino-acid chain; its full sequence is Sphingosine 1-phosphate receptor 1 (382 aa).

V2 is modified (N-acetylvaline). The Extracellular portion of the chain corresponds to 2-46; that stretch reads VSTSIPEVKALRSSVSDYGNYDIIVRHYNYTGKLNIGAEKDHGIK. An N6-acetyllysine modification is found at K10. N-linked (GlcNAc...) asparagine glycosylation is present at N30. A helical membrane pass occupies residues 47 to 68; it reads LTSVVFILICCFIILENIFVLL. Residues 69–82 lie on the Cytoplasmic side of the membrane; it reads TIWKTKKFHRPMYY. Residues 83-104 traverse the membrane as a helical segment; sequence FIGNLALSDLLAGVAYTANLLL. Over 105–116 the chain is Extracellular; it reads SGATTYKLTPAQ. A helical membrane pass occupies residues 117–138; sequence WFLREGSMFVALSASVFSLLAI. A sphing-4-enine 1-phosphate-binding site is contributed by 120-121; sequence RE. Topologically, residues 139–160 are cytoplasmic; the sequence is AIERYITMLKMKLHNGSNSSRS. A helical membrane pass occupies residues 161–182; that stretch reads FLLISACWVISLILGGLPIMGW. At 183–196 the chain is on the extracellular side; the sequence is NCISSLSSCSTVLP. Residues C184 and C191 are joined by a disulfide bond. Residues 197–224 traverse the membrane as a helical segment; that stretch reads LYHKHYILFCTTVFTLLLLSIVILYCRI. At 225–257 the chain is on the cytoplasmic side; the sequence is YSLVRTRSRRLTFRKNISKASRSSEKSLALLKT. At T236 the chain carries Phosphothreonine. Residues 258–278 traverse the membrane as a helical segment; the sequence is VIIVLSVFIACWAPLFILLLL. 265 to 269 serves as a coordination point for sphing-4-enine 1-phosphate; sequence FIACW. Residues 279–289 lie on the Extracellular side of the membrane; it reads DVGCKAKTCDI. C282 and C287 are joined by a disulfide. A helical membrane pass occupies residues 290–310; it reads LYKAEYFLVLAVLNSGTNPII. The Cytoplasmic portion of the chain corresponds to 311–382; that stretch reads YTLTNKEMRR…MSSGNVNSSS (72 aa). A lipid anchor (S-palmitoyl cysteine) is attached at C328. Residues 348–382 form a disordered region; it reads MEFSRSKSDNSSHPQKDDGDNPETIMSSGNVNSSS. 2 positions are modified to phosphoserine: S351 and S353. Over residues 351 to 366 the composition is skewed to basic and acidic residues; the sequence is SRSKSDNSSHPQKDDG. Polar residues predominate over residues 371–382; that stretch reads TIMSSGNVNSSS.

The protein belongs to the G-protein coupled receptor 1 family. In terms of assembly, interacts with GNAI1 and GNAI3. Interacts with CD69; this interaction promotes S1PR1 degradation. In terms of processing, palmitoylated by ZDHHC5. Palmitoylation is required for targeting to plasma membrane, enabling G(i) coupling. In terms of tissue distribution, expressed in a wide variety of tissues with highest levels in brain, heart and spleen. Lower levels found in kidney, liver, lung, muscle, placenta, thymus, and uterus. Very low levels in intestine, stomach and testis. According to PubMed:9931453, expressed modestly in apparent endothelial cells surrounding some blood vessels (e.g. aortic trunk).

Its subcellular location is the cell membrane. It localises to the endosome. The protein resides in the membrane raft. Its function is as follows. G-protein coupled receptor for the bioactive lysosphingolipid sphingosine 1-phosphate (S1P) that seems to be coupled to the G(i) subclass of heteromeric G proteins. Signaling leads to the activation of RAC1, SRC, PTK2/FAK1 and MAP kinases. Plays an important role in cell migration, probably via its role in the reorganization of the actin cytoskeleton and the formation of lamellipodia in response to stimuli that increase the activity of the sphingosine kinase SPHK1. Required for normal chemotaxis toward sphingosine 1-phosphate. Required for normal embryonic heart development and normal cardiac morphogenesis. Plays an important role in the regulation of sprouting angiogenesis and vascular maturation. Inhibits sprouting angiogenesis to prevent excessive sprouting during blood vessel development. Required for normal egress of mature T-cells from the thymus into the blood stream and into peripheral lymphoid organs. Plays a role in the migration of osteoclast precursor cells, the regulation of bone mineralization and bone homeostasis. Plays a role in responses to oxidized 1-palmitoyl-2-arachidonoyl-sn-glycero-3-phosphocholine by pulmonary endothelial cells and in the protection against ventilator-induced lung injury. This Mus musculus (Mouse) protein is Sphingosine 1-phosphate receptor 1.